The sequence spans 337 residues: MFIDEVRILVKAGDGGNGCLAFRREKFVPRGGPSGGDGGRGGDVTLVCSEHANTLLQFRFNPEHKAERGRHGEGSQRTGAEGRSIDVAVPVGTVVYDEATGERLYDFTVPGERFVVARGGRGGRGNQHFATPTHQAPTEHEPGRPGEEKRLRLELKLLADVGLVGFPNAGKSTLISRISAAKPKIAAYPFTTLEPNLGVVQMEGFRSFVVADIPGIIEGAHEGHGLGIQFLRHIERTRLLAHLVDVSEESGRDPVQDFEIIMQELARFSDQLVAKPMIVVATKMDVAQDPARVEALRDLAKSRDLPFFEISSATGQGIDALKHAMADRVLAPVPVPE.

In terms of domain architecture, Obg spans 1-158 (MFIDEVRILV…KRLRLELKLL (158 aa)). Basic and acidic residues-rich tracts occupy residues 61-74 (NPEH…HGEG) and 137-146 (PTEHEPGRPG). 2 disordered regions span residues 61–83 (NPEH…AEGR) and 119–146 (GGRG…GRPG). In terms of domain architecture, OBG-type G spans 159-330 (ADVGLVGFPN…LKHAMADRVL (172 aa)). GTP is bound by residues 165–172 (GFPNAGKS), 190–194 (FTTLE), 212–215 (DIPG), 282–285 (TKMD), and 311–313 (SSA). Mg(2+)-binding residues include S172 and T192.

The protein belongs to the TRAFAC class OBG-HflX-like GTPase superfamily. OBG GTPase family. As to quaternary structure, monomer. Requires Mg(2+) as cofactor.

It localises to the cytoplasm. Its function is as follows. An essential GTPase which binds GTP, GDP and possibly (p)ppGpp with moderate affinity, with high nucleotide exchange rates and a fairly low GTP hydrolysis rate. Plays a role in control of the cell cycle, stress response, ribosome biogenesis and in those bacteria that undergo differentiation, in morphogenesis control. This Solibacter usitatus (strain Ellin6076) protein is GTPase Obg.